A 605-amino-acid chain; its full sequence is MSSSTTVVDTIRNFCIIAHIDHGKSTLADRFLEATDTLLHNQATAQVLDDMDLERERGITIKSHAIQMRYTSADGEEYILNLIDTPGHVDFSYEVSRSLAACEGALLVVDATQGVEAQTIANLYLAVEAGLEILPVINKIDLPSSDVEGVSQQIIDLMGVDRSEILEVSAKAGIGVDALLEAIIKRVPAPVDQRSKPLRALIFDSVFDAYRGAIVYLRIVDGMLNKGDRVRFFANEKVFLADEIGTMGLKRQPVKTLGAGDVGYLICSIKDVRDAKVGDTVTLADAPAKERLSGYKDVKPMVFSGLYPVNSNEFEDLRESLEKLSLNDASLVYTPETSAALGFGFRCGFLGLLHMEIIQERLEREYQVNIITTVPNVEYRVISSEGGTHVVDNPSKMPDAGFIEKIEEPYVSVQIITLAEYIGNIMKLAMERRGEYKNTDYLDTTRVNLHFEFPLAEIVFDFHDKLKSVSKGYASMDYEYIGYRDSDLVKLDVLLNGESVDALSTIVHRSKAYEWGRRLCQKLKSIIPRQMYEVAIQAAIGSRVIARETISAMRKNVLAKCYGGDISRKRKLLEKQKEGKKRMKQVGRVEIPQEAFLAVLNMDDQ.

Residues 9-191 (DTIRNFCIIA…AIIKRVPAPV (183 aa)) enclose the tr-type G domain. Residues 21-26 (DHGKST) and 138-141 (NKID) contribute to the GTP site.

Belongs to the TRAFAC class translation factor GTPase superfamily. Classic translation factor GTPase family. LepA subfamily.

It localises to the cell inner membrane. It catalyses the reaction GTP + H2O = GDP + phosphate + H(+). Required for accurate and efficient protein synthesis under certain stress conditions. May act as a fidelity factor of the translation reaction, by catalyzing a one-codon backward translocation of tRNAs on improperly translocated ribosomes. Back-translocation proceeds from a post-translocation (POST) complex to a pre-translocation (PRE) complex, thus giving elongation factor G a second chance to translocate the tRNAs correctly. Binds to ribosomes in a GTP-dependent manner. The chain is Elongation factor 4 from Chlorobium phaeobacteroides (strain BS1).